Consider the following 325-residue polypeptide: Elongation factor P--(R)-beta-lysine ligase (325 aa).

A substrate-binding site is contributed by 76-78 (SPE). Residues 100 to 102 (RNE) and asparagine 109 each bind ATP. Tyrosine 118 serves as a coordination point for substrate. 244-245 (EL) contributes to the ATP binding site. A substrate-binding site is contributed by glutamate 251. Glycine 300 provides a ligand contact to ATP.

Belongs to the class-II aminoacyl-tRNA synthetase family. EpmA subfamily. In terms of assembly, homodimer.

It carries out the reaction D-beta-lysine + L-lysyl-[protein] + ATP = N(6)-((3R)-3,6-diaminohexanoyl)-L-lysyl-[protein] + AMP + diphosphate + H(+). With EpmB is involved in the beta-lysylation step of the post-translational modification of translation elongation factor P (EF-P) on 'Lys-34'. Catalyzes the ATP-dependent activation of (R)-beta-lysine produced by EpmB, forming a lysyl-adenylate, from which the beta-lysyl moiety is then transferred to the epsilon-amino group of EF-P 'Lys-34'. This Salmonella paratyphi A (strain ATCC 9150 / SARB42) protein is Elongation factor P--(R)-beta-lysine ligase.